The primary structure comprises 268 residues: Protein MGF 300-1L (268 aa).

Residues 1–175 (MVSLTTCCLK…QTFKIFYAKN (175 aa)) are Cytoplasmic-facing. The helical transmembrane segment at 176–193 (YSLSTLYCIFLAIYYKRY) threads the bilayer. Over 194-268 (TALRKMVKIY…MYAFSQNNFW (75 aa)) the chain is Extracellular.

Belongs to the asfivirus MGF 300 family.

The protein resides in the host membrane. Functionally, plays a role in virus cell tropism, and may be required for efficient virus replication in macrophages. In African swine fever virus (isolate Tick/South Africa/Pretoriuskop Pr4/1996) (ASFV), this protein is Protein MGF 300-1L.